The following is a 122-amino-acid chain: Ribosome-binding factor A (122 aa).

It belongs to the RbfA family. Monomer. Binds 30S ribosomal subunits, but not 50S ribosomal subunits or 70S ribosomes.

The protein localises to the cytoplasm. In terms of biological role, one of several proteins that assist in the late maturation steps of the functional core of the 30S ribosomal subunit. Associates with free 30S ribosomal subunits (but not with 30S subunits that are part of 70S ribosomes or polysomes). Required for efficient processing of 16S rRNA. May interact with the 5'-terminal helix region of 16S rRNA. In Halothermothrix orenii (strain H 168 / OCM 544 / DSM 9562), this protein is Ribosome-binding factor A.